The following is a 497-amino-acid chain: Putative zinc finger and SCAN domain-containing protein 5D (497 aa).

Residues K41–K123 form the SCAN box domain. Residues P148 to N342 form a disordered region. Over residues V158–N167 the composition is skewed to polar residues. Basic and acidic residues-rich tracts occupy residues P216 to N229 and K249 to S259. C2H2-type zinc fingers lie at residues F352–H374, F380–H402, Y408–H430, Y436–H458, and Y464–H486.

It localises to the nucleus. This chain is Putative zinc finger and SCAN domain-containing protein 5D, found in Homo sapiens (Human).